A 161-amino-acid polypeptide reads, in one-letter code: Probable ribosome biogenesis protein RLP24 (161 aa).

Belongs to the eukaryotic ribosomal protein eL24 family. In terms of assembly, associated with nucleolar and cytoplasmic pre-60S particles. At the end of biogenesis it dissociates from cytoplasmic pre-60S particles and is likely to be exchanged for its ribosomal homolog, RPL24.

It is found in the nucleus. The protein resides in the nucleolus. In terms of biological role, involved in the biogenesis of the 60S ribosomal subunit. Ensures the docking of GTPBP4/NOG1 to pre-60S particles. This is Probable ribosome biogenesis protein RLP24 (rsl24d1) from Danio rerio (Zebrafish).